A 185-amino-acid polypeptide reads, in one-letter code: HTH-type transcriptional regulator Hpr (185 aa).

The HTH marR-type domain occupies 13-157; sequence AMIFSQRIAQ…LIAILRNIYG (145 aa). A DNA-binding region (H-T-H motif) is located at residues 63 to 86; sequence ISEIAKFGVMHVSTAFNFSKKLEE.

In terms of assembly, homodimer.

Functionally, negative regulator of protease production and sporulation. The chain is HTH-type transcriptional regulator Hpr from Bacillus anthracis (strain CDC 684 / NRRL 3495).